Here is a 408-residue protein sequence, read N- to C-terminus: Phosphoglycerate kinase (408 aa).

Substrate contacts are provided by residues 24–26 (DLN), R39, 62–65 (HLGR), R121, and R161. Residues K211, G307, E338, and 364–367 (GGDS) each bind ATP.

The protein belongs to the phosphoglycerate kinase family. As to quaternary structure, monomer.

The protein resides in the cytoplasm. It carries out the reaction (2R)-3-phosphoglycerate + ATP = (2R)-3-phospho-glyceroyl phosphate + ADP. The protein operates within carbohydrate degradation; glycolysis; pyruvate from D-glyceraldehyde 3-phosphate: step 2/5. The sequence is that of Phosphoglycerate kinase from Arthrobacter sp. (strain FB24).